Consider the following 202-residue polypeptide: Putative 3-methyladenine DNA glycosylase (202 aa).

Belongs to the DNA glycosylase MPG family.

The sequence is that of Putative 3-methyladenine DNA glycosylase from Staphylococcus aureus (strain bovine RF122 / ET3-1).